Reading from the N-terminus, the 24-residue chain is Caerin-2.1 (24 aa).

It belongs to the frog skin active peptide (FSAP) family. Caerin subfamily. Expressed by the skin dorsal glands.

It is found in the secreted. Inhibits the formation of NO by neuronal nitric oxide synthase. This chain is Caerin-2.1, found in Litoria rothii (Roth's tree frog).